A 120-amino-acid polypeptide reads, in one-letter code: NAD(P)H-quinone oxidoreductase subunit 3, chloroplastic (120 aa).

Transmembrane regions (helical) follow at residues 9–29 (IFWA…LISG), 64–84 (MFAL…PWAM), and 88–108 (VLGV…IVGS).

This sequence belongs to the complex I subunit 3 family. NDH is composed of at least 16 different subunits, 5 of which are encoded in the nucleus.

It localises to the plastid. Its subcellular location is the chloroplast thylakoid membrane. It catalyses the reaction a plastoquinone + NADH + (n+1) H(+)(in) = a plastoquinol + NAD(+) + n H(+)(out). The catalysed reaction is a plastoquinone + NADPH + (n+1) H(+)(in) = a plastoquinol + NADP(+) + n H(+)(out). NDH shuttles electrons from NAD(P)H:plastoquinone, via FMN and iron-sulfur (Fe-S) centers, to quinones in the photosynthetic chain and possibly in a chloroplast respiratory chain. The immediate electron acceptor for the enzyme in this species is believed to be plastoquinone. Couples the redox reaction to proton translocation, and thus conserves the redox energy in a proton gradient. The protein is NAD(P)H-quinone oxidoreductase subunit 3, chloroplastic of Carica papaya (Papaya).